The sequence spans 164 residues: ATP synthase subunit b 1 (164 aa).

Residues 8 to 28 form a helical membrane-spanning segment; that stretch reads PETWVAVAFVILMGVFAYFGV.

It belongs to the ATPase B chain family. In terms of assembly, F-type ATPases have 2 components, F(1) - the catalytic core - and F(0) - the membrane proton channel. F(1) has five subunits: alpha(3), beta(3), gamma(1), delta(1), epsilon(1). F(0) has three main subunits: a(1), b(2) and c(10-14). The alpha and beta chains form an alternating ring which encloses part of the gamma chain. F(1) is attached to F(0) by a central stalk formed by the gamma and epsilon chains, while a peripheral stalk is formed by the delta and b chains.

The protein resides in the cell inner membrane. Its function is as follows. F(1)F(0) ATP synthase produces ATP from ADP in the presence of a proton or sodium gradient. F-type ATPases consist of two structural domains, F(1) containing the extramembraneous catalytic core and F(0) containing the membrane proton channel, linked together by a central stalk and a peripheral stalk. During catalysis, ATP synthesis in the catalytic domain of F(1) is coupled via a rotary mechanism of the central stalk subunits to proton translocation. Functionally, component of the F(0) channel, it forms part of the peripheral stalk, linking F(1) to F(0). The sequence is that of ATP synthase subunit b 1 from Rhodopseudomonas palustris (strain BisB18).